Here is a 347-residue protein sequence, read N- to C-terminus: Hydroxymethylglutaryl-CoA synthase (347 aa).

Residues D29 and A30 each contribute to the (3S)-3-hydroxy-3-methylglutaryl-CoA site. E80 serves as the catalytic Proton donor/acceptor. (3S)-3-hydroxy-3-methylglutaryl-CoA contacts are provided by C112 and T153. Catalysis depends on C112, which acts as the Acyl-thioester intermediate. A CoA-binding site is contributed by R199. (3S)-3-hydroxy-3-methylglutaryl-CoA contacts are provided by T201 and H234. H234 functions as the Proton donor/acceptor in the catalytic mechanism. K239 contributes to the CoA binding site. 3 residues coordinate (3S)-3-hydroxy-3-methylglutaryl-CoA: R243, N266, and S296.

This sequence belongs to the thiolase-like superfamily. Archaeal HMG-CoA synthase family. As to quaternary structure, interacts with acetoacetyl-CoA thiolase that catalyzes the precedent step in the pathway and with a DUF35 protein. The acetoacetyl-CoA thiolase/HMG-CoA synthase complex channels the intermediate via a fused CoA-binding site, which allows for efficient coupling of the endergonic thiolase reaction with the exergonic HMGCS reaction.

The catalysed reaction is acetoacetyl-CoA + acetyl-CoA + H2O = (3S)-3-hydroxy-3-methylglutaryl-CoA + CoA + H(+). It participates in metabolic intermediate biosynthesis; (R)-mevalonate biosynthesis; (R)-mevalonate from acetyl-CoA: step 2/3. Catalyzes the condensation of acetyl-CoA with acetoacetyl-CoA to form 3-hydroxy-3-methylglutaryl-CoA (HMG-CoA). Functions in the mevalonate (MVA) pathway leading to isopentenyl diphosphate (IPP), a key precursor for the biosynthesis of isoprenoid compounds that are building blocks of archaeal membrane lipids. The sequence is that of Hydroxymethylglutaryl-CoA synthase from Methanocella arvoryzae (strain DSM 22066 / NBRC 105507 / MRE50).